The sequence spans 145 residues: Ornithine decarboxylase antizyme (145 aa).

This sequence belongs to the ODC antizyme family. In terms of assembly, interacts with ODC1 and thereby sterically blocks ODC homodimerization.

Its function is as follows. Ornithine decarboxylase (ODC) antizyme protein that negatively regulates ODC activity and intracellular polyamine biosynthesis and uptake in response to increased intracellular polyamine levels. Binds to ODC monomers, inhibiting the assembly of the functional ODC homodimer, and targets the monomers for ubiquitin-independent proteolytic destruction by the 26S proteasome. The sequence is that of Ornithine decarboxylase antizyme from Onchocerca volvulus.